Reading from the N-terminus, the 341-residue chain is LIM and senescent cell antigen-like-containing domain protein 2 (341 aa).

5 consecutive LIM zinc-binding domains span residues 13–74 (AVCQ…LFAP), 76–133 (CGSC…EKAK), 138–195 (YICQ…KMGV), 196–255 (PICG…LFGD), and 256–315 (VCYN…FPLE). Phenylalanine 22 bears the Phosphoserine mark. Phosphothreonine is present on threonine 327. Serine 328 is subject to Phosphoserine.

Interacts with TGFB1I1. Interacts with integrin-linked protein kinase 1 (ILK) via the first LIM domain, and in competition with LIMS1. Part of the heterotrimeric IPP complex composed of integrin-linked kinase (ILK), LIMS1 or LIMS2, and PARVA.

The protein resides in the nucleus. It is found in the cell junction. It localises to the focal adhesion. Its subcellular location is the cell membrane. Its function is as follows. Adapter protein in a cytoplasmic complex linking beta-integrins to the actin cytoskeleton, bridges the complex to cell surface receptor tyrosine kinases and growth factor receptors. Plays a role in modulating cell spreading and migration. This Homo sapiens (Human) protein is LIM and senescent cell antigen-like-containing domain protein 2 (LIMS2).